Reading from the N-terminus, the 395-residue chain is NADH-quinone oxidoreductase subunit D (395 aa).

The protein belongs to the complex I 49 kDa subunit family. As to quaternary structure, NDH-1 is composed of 14 different subunits. Subunits NuoB, C, D, E, F, and G constitute the peripheral sector of the complex.

Its subcellular location is the cell inner membrane. The enzyme catalyses a quinone + NADH + 5 H(+)(in) = a quinol + NAD(+) + 4 H(+)(out). Its function is as follows. NDH-1 shuttles electrons from NADH, via FMN and iron-sulfur (Fe-S) centers, to quinones in the respiratory chain. The immediate electron acceptor for the enzyme in this species is believed to be a menaquinone. Couples the redox reaction to proton translocation (for every two electrons transferred, four hydrogen ions are translocated across the cytoplasmic membrane), and thus conserves the redox energy in a proton gradient. This is NADH-quinone oxidoreductase subunit D from Chlorobium luteolum (strain DSM 273 / BCRC 81028 / 2530) (Pelodictyon luteolum).